We begin with the raw amino-acid sequence, 602 residues long: MDKGRERMAAAAAAAAAAAAAAQCRSPRCAAERRGFRRELDSWRHRLMHCVGFESILEGLYGPRLRRDLSLFEDCEPEELTDWSMDEKCSFCNLQREAVSDCIPSLDSSQSTPTEELSSQGQSNTDKIECQAENYLNALFRKKDLPQNCDPNIPLVAQELMKKMIRQFAIEYISKSGKTQENRNGSIGPSIVCKSIQMNQAENSLQEEQEGPLDLTVNRMQEQNTQQGDGVLDLSTKKTSIKSEESSICDPSSENSVAGRLHRNREDYVERSAEFADGLLSKALKDIQSGALDINKAGILYGIPQKTLLLHLEALPAGKPASFKNKTRDFHDSYSYKDSKETCAVLQKVALWARAQAERTEKSKLNLLETSEIKFPTASTYLHQLTLQKMVTQFKEKNESLQYETSNPTVQLKIPQLRVSSVSKSQPDGSGLLDVMYQVSKTSSVLEGSALQKLKNILPKQNKIECSGPVTHSSVDSYFLHGDLSPLCLNSKNGTVDGTSENTEDGLDRKDSKQPRKKRGRYRQYDHEIMEEAIAMVMSGKMSVSKAQGIYGVPHSTLEYKVKERSGTLKTPPKKKLRLPDTGLYNMTDSGTGSCKNSSKPV.

The tract at residues 104–124 (PSLDSSQSTPTEELSSQGQSN) is disordered. A compositionally biased stretch (polar residues) spans 106 to 124 (LDSSQSTPTEELSSQGQSN). Glycyl lysine isopeptide (Lys-Gly) (interchain with G-Cter in SUMO2) cross-links involve residues K242, K319, K340, and K397. Disordered stretches follow at residues 495–521 (TVDG…KRGR) and 564–602 (ERSG…SKPV). The HTH psq-type domain occupies 516–568 (RKKRGRYRQYDHEIMEEAIAMVMSGKMSVSKAQGIYGVPHSTLEYKVKERSGT). The segment at residues 544–564 (VSKAQGIYGVPHSTLEYKVKE) is a DNA-binding region (H-T-H motif). Polar residues predominate over residues 585–602 (YNMTDSGTGSCKNSSKPV).

Its subcellular location is the nucleus. May act as transcription activator that binds DNA elements with the sequence 5'-CCCTATCGATCGATCTCTACCT-3'. May play a role in spermatogenesis. The polypeptide is Ligand-dependent nuclear receptor corepressor-like protein (LCORL) (Homo sapiens (Human)).